The sequence spans 369 residues: Chorismate synthase (369 aa).

R48 and R54 together coordinate NADP(+). FMN is bound by residues 125 to 127, 238 to 239, G278, 293 to 297, and R319; these read RSS, NA, and KPTSS.

The protein belongs to the chorismate synthase family. Homotetramer. FMNH2 serves as cofactor.

It catalyses the reaction 5-O-(1-carboxyvinyl)-3-phosphoshikimate = chorismate + phosphate. Its pathway is metabolic intermediate biosynthesis; chorismate biosynthesis; chorismate from D-erythrose 4-phosphate and phosphoenolpyruvate: step 7/7. Catalyzes the anti-1,4-elimination of the C-3 phosphate and the C-6 proR hydrogen from 5-enolpyruvylshikimate-3-phosphate (EPSP) to yield chorismate, which is the branch point compound that serves as the starting substrate for the three terminal pathways of aromatic amino acid biosynthesis. This reaction introduces a second double bond into the aromatic ring system. This chain is Chorismate synthase, found in Burkholderia mallei (strain ATCC 23344).